A 422-amino-acid chain; its full sequence is MLDMKFIRENLETVADMLKRRGTEAPLDEFKELDEKRREIIQEVEQLKHKRNVVSSKIGELKRAGEDASDIIAEMKEVSATIKKYDEELRGIEERLQQVVLSIPNMPHDSVPVGEDEDDNVEVRRWGEPRKFDFEFKPHWDLGEALDILDFERGSKVSGARFTFLKGAGARLERSLISFMIDHHTQNGYTEIFPPFMVNSDSCIGTGQLPKFAGDMFKVEGTDYYLIPTAEVPVTNLYRDEILNAEDLPVYHVAYSACFRAEAGAHGRDTRGIIRQHQFNKVELVKFVHPDKSFEELEKLTRNAEEILQMLELPYRVVTLCTGDLTFSSAKTYDIEVWMPAYDTYREISSCSNFKDFQARRAGIRFRPEPGAKAEYVHTLNGSGLAIGRTVAAIMENYQNEDGSITVPEVLRPYMGMDVIKP.

229 to 231 (TAE) contacts L-serine. Residue 260–262 (RAE) coordinates ATP. Glu-283 is an L-serine binding site. 347 to 350 (EISS) is a binding site for ATP. Ser-383 provides a ligand contact to L-serine.

Belongs to the class-II aminoacyl-tRNA synthetase family. Type-1 seryl-tRNA synthetase subfamily. In terms of assembly, homodimer. The tRNA molecule binds across the dimer.

The protein resides in the cytoplasm. It catalyses the reaction tRNA(Ser) + L-serine + ATP = L-seryl-tRNA(Ser) + AMP + diphosphate + H(+). It carries out the reaction tRNA(Sec) + L-serine + ATP = L-seryl-tRNA(Sec) + AMP + diphosphate + H(+). Its pathway is aminoacyl-tRNA biosynthesis; selenocysteinyl-tRNA(Sec) biosynthesis; L-seryl-tRNA(Sec) from L-serine and tRNA(Sec): step 1/1. Its function is as follows. Catalyzes the attachment of serine to tRNA(Ser). Is also able to aminoacylate tRNA(Sec) with serine, to form the misacylated tRNA L-seryl-tRNA(Sec), which will be further converted into selenocysteinyl-tRNA(Sec). The protein is Serine--tRNA ligase of Halothermothrix orenii (strain H 168 / OCM 544 / DSM 9562).